Reading from the N-terminus, the 452-residue chain is Protein FAM81B (452 aa).

Polar residues-rich tracts occupy residues 1 to 11 and 38 to 55; these read MQLQFLGTLAS and IMSSDTNVNKSASPTATA. Residues 1–85 are disordered; sequence MQLQFLGTLA…KVRLSPAKMS (85 aa). 2 coiled-coil regions span residues 164 to 192 and 329 to 452; these read IQTITSIVKKLSQNIEILEDQIRARDQAA and LGHI…LQEV.

The protein belongs to the FAM81 family.

This Homo sapiens (Human) protein is Protein FAM81B (FAM81B).